Here is a 557-residue protein sequence, read N- to C-terminus: Membrane protein insertase YidC (557 aa).

3 helical membrane-spanning segments follow: residues 371–391 (WGWSIILLTILIKLVFFPLSA), 437–457 (LGGCLPVVIQIPVFISLYWVL), and 515–535 (PIVFSVMFFFFPAGLVLYWVV).

Belongs to the OXA1/ALB3/YidC family. Type 1 subfamily. Interacts with the Sec translocase complex via SecD. Specifically interacts with transmembrane segments of nascent integral membrane proteins during membrane integration.

The protein localises to the cell inner membrane. Required for the insertion and/or proper folding and/or complex formation of integral membrane proteins into the membrane. Involved in integration of membrane proteins that insert both dependently and independently of the Sec translocase complex, as well as at least some lipoproteins. Aids folding of multispanning membrane proteins. The sequence is that of Membrane protein insertase YidC from Polynucleobacter necessarius subsp. necessarius (strain STIR1).